Reading from the N-terminus, the 89-residue chain is Small ribosomal subunit protein uS15 (89 aa).

This sequence belongs to the universal ribosomal protein uS15 family. As to quaternary structure, part of the 30S ribosomal subunit. Forms a bridge to the 50S subunit in the 70S ribosome, contacting the 23S rRNA.

In terms of biological role, one of the primary rRNA binding proteins, it binds directly to 16S rRNA where it helps nucleate assembly of the platform of the 30S subunit by binding and bridging several RNA helices of the 16S rRNA. Forms an intersubunit bridge (bridge B4) with the 23S rRNA of the 50S subunit in the ribosome. The chain is Small ribosomal subunit protein uS15 from Chlorobaculum tepidum (strain ATCC 49652 / DSM 12025 / NBRC 103806 / TLS) (Chlorobium tepidum).